The sequence spans 301 residues: Probable alpha-L-glutamate ligase (301 aa).

The ATP-grasp domain occupies 104 to 287 (LQFLSRKGID…IAGMIIEFIE (184 aa)). ATP is bound by residues Lys141, 178–179 (EF), Asp187, and 211–213 (RSN). The Mg(2+) site is built by Asp248, Glu260, and Asn262. Mn(2+) contacts are provided by Asp248, Glu260, and Asn262.

Belongs to the RimK family. Mg(2+) is required as a cofactor. Mn(2+) serves as cofactor.

The polypeptide is Probable alpha-L-glutamate ligase (Coxiella burnetii (strain CbuK_Q154) (Coxiella burnetii (strain Q154))).